The chain runs to 512 residues: MMYASLVHWLALAVALAVPFVTALGSVPYPQDDPFYYPSENGWQNEAPGTILRQRKIQAASLGIFEWKLDAWQVLYRTAGARPDKPSYTVTTFLVPSHAHRDRVVTISSPENSNFIQCAPSYAFRKTGVLEIANFEPRWEQMLYTLFLAEGWIVNAPDHEGPESAFSAGRFGGHMVLDSMRAANNFKPLQLSSNPMHIGHGYSGGSTPNGWAASLHESYANELNVVGWSLGGSMTDPLYTLNSLDGKPTSSLVVAGAIGLMDAYRDEVGNLLDDEVWTEEGKIAEKVMRNSCVYESVIRYFGTTFQSERYIKGGRNLSSWPQMRKISNMNTMGHNPRFTPRKPIFMFHALYDEEINWHQANKTAVEWCNNGANVRFLTYSSTSLVHVTTYLLNLPYIVQYMRDRFNGKDWYGGGCQFDVESQNPALDVNVLGERFRGILEAALDMLGKEIGPNDSILKNRLKAGQNPNTHHKTKLHVLKKGDISPGEGGDHTKESKKAAAKFKAEKKHGKHH.

The signal sequence occupies residues 1–17 (MMYASLVHWLALAVALA). Residues cysteine 118 and cysteine 292 are joined by a disulfide bond. The Nucleophile role is filled by serine 203. The N-linked (GlcNAc...) asparagine glycan is linked to asparagine 316. Aspartate 352 is a catalytic residue. The N-linked (GlcNAc...) asparagine glycan is linked to asparagine 361. Histidine 386 is an active-site residue. The N-linked (GlcNAc...) asparagine glycan is linked to asparagine 453. Positions 480-512 (KGDISPGEGGDHTKESKKAAAKFKAEKKHGKHH) are disordered. Residues 488–497 (GGDHTKESKK) are compositionally biased toward basic and acidic residues. A compositionally biased stretch (basic residues) spans 498 to 512 (AAAKFKAEKKHGKHH).

It belongs to the AB hydrolase superfamily. Lipase family. Class Lip subfamily.

The protein resides in the secreted. It carries out the reaction a triacylglycerol + H2O = a diacylglycerol + a fatty acid + H(+). It catalyses the reaction a monoacylglycerol + H2O = glycerol + a fatty acid + H(+). The catalysed reaction is a diacylglycerol + H2O = a monoacylglycerol + a fatty acid + H(+). Its function is as follows. Secreted lipase that hydrolyzes acylglycerol lipids such as triacylglycerols and consequently releases free fatty acid. Can hydrolyze 4-nitrophenyl palmitate to release 4-nitrophenol and palmitoic acid. Due to an absence of fatty acid synthase genes in Malassezia species, secretory lipases are essential for the yeast to generate free fatty acids from degradation of sebum and assimilate them as lipid sources for growth. Plays an essential role at the pathogen-host interface during disease progression. The protein is Secreted triacylglycerol lipase LIP5 of Malassezia restricta (strain ATCC 96810 / NBRC 103918 / CBS 7877) (Seborrheic dermatitis infection agent).